We begin with the raw amino-acid sequence, 81 residues long: Centromere protein X (81 aa).

Methionine 1 bears the N-acetylmethionine mark.

The protein belongs to the CENP-X/MHF2 family. In terms of assembly, heterodimer with CENPX, sometimes called MHF; this interaction stabilizes both partners. MHF heterodimers can assemble to form tetrameric structures. MHF also coassemble with CENPT-CENPW heterodimers at centromeres to form the tetrameric CENP-T-W-S-X complex. Forms a discrete complex with FANCM and CENPX, called FANCM-MHF; this interaction, probably mediated by direct binding between CENPS and FANCM, leads to synergistic activation of double-stranded DNA binding and strongly stimulates FANCM-mediated DNA remodeling. Recruited by FANCM to the Fanconi anemia (FA) core complex, which consists of CENPS, CENPX, FANCA, FANCB, FANCC, FANCE, FANCF, FANCG, FANCL, FANCM, FAAP24 and FAAP100. The FA core complex associates with Bloom syndrome (BLM) complex, which consists of at least BLM, DNA topoisomerase 3-alpha (TOP3A), RMI1/BLAP75, RPA1/RPA70 and RPA2/RPA32. The super complex between FA and BLM is called BRAFT.

The protein localises to the nucleus. Its subcellular location is the chromosome. The protein resides in the centromere. It localises to the kinetochore. In terms of biological role, DNA-binding component of the Fanconi anemia (FA) core complex. Required for the normal activation of the FA pathway, leading to monoubiquitination of the FANCI-FANCD2 complex in response to DNA damage, cellular resistance to DNA cross-linking drugs, and prevention of chromosomal breakage. In complex with CENPS (MHF heterodimer), crucial cofactor for FANCM in both binding and ATP-dependent remodeling of DNA. Stabilizes FANCM. In complex with CENPS and FANCM (but not other FANC proteins), rapidly recruited to blocked forks and promotes gene conversion at blocked replication forks. In complex with CENPS, CENPT and CENPW (CENP-T-W-S-X heterotetramer), involved in the formation of a functional kinetochore outer plate, which is essential for kinetochore-microtubule attachment and faithful mitotic progression. As a component of MHF and CENP-T-W-S-X complexes, binds DNA and bends it to form a nucleosome-like structure. DNA-binding function is fulfilled in the presence of CENPS, with the following preference for DNA substates: Holliday junction &gt; double-stranded &gt; splay arm &gt; single-stranded. Does not bind DNA on its own. The chain is Centromere protein X (CENPX) from Homo sapiens (Human).